The following is a 134-amino-acid chain: uncharacterized protein (134 aa).

This is an uncharacterized protein from Ictaluridae (bullhead catfishes).